Reading from the N-terminus, the 129-residue chain is Cytochrome c3 (129 aa).

Residues 1 to 22 (MRKLFFCGVLALAVAFALPVVA) form the signal peptide. Residues His44, His47, Cys52, Cys55, His56, His57, Cys68, Cys73, His74, His92, Cys101, Cys104, His105, Cys122, Cys127, and His128 each coordinate heme c.

Post-translationally, binds 4 heme c groups per subunit.

It is found in the periplasm. In terms of biological role, participates in sulfate respiration coupled with phosphorylation by transferring electrons from the enzyme dehydrogenase to ferredoxin. The chain is Cytochrome c3 from Nitratidesulfovibrio vulgaris (strain ATCC 29579 / DSM 644 / CCUG 34227 / NCIMB 8303 / VKM B-1760 / Hildenborough) (Desulfovibrio vulgaris).